The primary structure comprises 569 residues: 2-succinyl-5-enolpyruvyl-6-hydroxy-3-cyclohexene-1-carboxylate synthase (569 aa).

Belongs to the TPP enzyme family. MenD subfamily. Homodimer. The cofactor is Mg(2+). Requires Mn(2+) as cofactor. Thiamine diphosphate serves as cofactor.

It carries out the reaction isochorismate + 2-oxoglutarate + H(+) = 5-enolpyruvoyl-6-hydroxy-2-succinyl-cyclohex-3-ene-1-carboxylate + CO2. It functions in the pathway quinol/quinone metabolism; 1,4-dihydroxy-2-naphthoate biosynthesis; 1,4-dihydroxy-2-naphthoate from chorismate: step 2/7. The protein operates within quinol/quinone metabolism; menaquinone biosynthesis. Its function is as follows. Catalyzes the thiamine diphosphate-dependent decarboxylation of 2-oxoglutarate and the subsequent addition of the resulting succinic semialdehyde-thiamine pyrophosphate anion to isochorismate to yield 2-succinyl-5-enolpyruvyl-6-hydroxy-3-cyclohexene-1-carboxylate (SEPHCHC). This Shewanella sediminis (strain HAW-EB3) protein is 2-succinyl-5-enolpyruvyl-6-hydroxy-3-cyclohexene-1-carboxylate synthase.